We begin with the raw amino-acid sequence, 878 residues long: DNA mismatch repair protein MutS (878 aa).

630-637 (GPNMAGKS) is a binding site for ATP.

The protein belongs to the DNA mismatch repair MutS family.

In terms of biological role, this protein is involved in the repair of mismatches in DNA. It is possible that it carries out the mismatch recognition step. This protein has a weak ATPase activity. This chain is DNA mismatch repair protein MutS, found in Chlorobaculum tepidum (strain ATCC 49652 / DSM 12025 / NBRC 103806 / TLS) (Chlorobium tepidum).